We begin with the raw amino-acid sequence, 257 residues long: Kallikrein-1 (257 aa).

Positions 1 to 18 (MWFLVLCLALSLGGTGRA) are cleaved as a signal peptide. Positions 19–24 (PPIQSR) are cleaved as a propeptide — activation peptide. In terms of domain architecture, Peptidase S1 spans 25 to 254 (IVGGWECSQP…YVKWIEDTIA (230 aa)). 5 disulfide bridges follow: C31/C169, C47/C63, C148/C215, C180/C194, and C205/C230. The active-site Charge relay system is the H62. An O-linked (GalNAc...) serine glycan is attached at S90. N-linked (GlcNAc...) asparagine glycosylation is present at N99. O-linked (GalNAc...) serine glycosylation occurs at S101. N105 carries an N-linked (GlcNAc...) asparagine glycan. The Charge relay system role is filled by D116. N160 is a glycosylation site (N-linked (GlcNAc...) asparagine). O-linked (GalNAc...) serine glycosylation occurs at S162. S209 (charge relay system) is an active-site residue.

The protein belongs to the peptidase S1 family. Kallikrein subfamily.

The catalysed reaction is Preferential cleavage of Arg-|-Xaa bonds in small molecule substrates. Highly selective action to release kallidin (lysyl-bradykinin) from kininogen involves hydrolysis of Met-|-Xaa or Leu-|-Xaa.. In terms of biological role, glandular kallikreins cleave Met-Lys and Arg-Ser bonds in kininogen to release Lys-bradykinin. This Macaca fascicularis (Crab-eating macaque) protein is Kallikrein-1 (KLK1).